The following is a 215-amino-acid chain: Beta-crystallin A3-1 (215 aa).

The tract at residues 1–30 (MEIPVDQTEREDITSEKMAQINPLPVHLGP) is N-terminal arm. Beta/gamma crystallin 'Greek key' domains lie at 31 to 70 (WKIT…KVEC) and 71 to 117 (GAWI…RPIC). Residues 118 to 123 (SANHIE) form a connecting peptide region. Beta/gamma crystallin 'Greek key' domains lie at 124-165 (SKLV…KVQC) and 166-214 (GAWV…RRIQ).

It belongs to the beta/gamma-crystallin family. In terms of assembly, homo/heterodimer, or complexes of higher-order. The structure of beta-crystallin oligomers seems to be stabilized through interactions between the N-terminal arms. In terms of processing, the N-terminus is blocked.

In terms of biological role, crystallins are the dominant structural components of the vertebrate eye lens. This is Beta-crystallin A3-1 from Aquarana catesbeiana (American bullfrog).